The following is a 347-amino-acid chain: NADH-ubiquinone oxidoreductase chain 2 (347 aa).

A run of 11 helical transmembrane segments spans residues 1-21 (MNPI…MIVM), 25-45 (HWLM…PILM), 60-80 (FLTQ…NLMF), 89-109 (IFNP…LGLS), 111-131 (FHFW…LILL), 149-169 (INLD…GWGG), 178-198 (IMAY…TYNP), 201-221 (TALN…LFML), 242-262 (SLIL…GFIP), 274-294 (DSII…YFYM), and 323-343 (MNFL…TPIM).

The protein belongs to the complex I subunit 2 family. As to quaternary structure, core subunit of respiratory chain NADH dehydrogenase (Complex I) which is composed of 45 different subunits. Interacts with TMEM242.

It localises to the mitochondrion inner membrane. It carries out the reaction a ubiquinone + NADH + 5 H(+)(in) = a ubiquinol + NAD(+) + 4 H(+)(out). Functionally, core subunit of the mitochondrial membrane respiratory chain NADH dehydrogenase (Complex I) which catalyzes electron transfer from NADH through the respiratory chain, using ubiquinone as an electron acceptor. Essential for the catalytic activity and assembly of complex I. The chain is NADH-ubiquinone oxidoreductase chain 2 from Ceratotherium simum (White rhinoceros).